Here is a 244-residue protein sequence, read N- to C-terminus: Small ribosomal subunit protein uS3 (244 aa).

The KH type-2 domain maps to 39 to 107 (VREMLRKKLA…PAHINVTEVR (69 aa)). Residues 213 to 244 (VGQEKQDDSPRNDRNDRGDRGDRPSRPAREAR) are disordered. The span at 216 to 244 (EKQDDSPRNDRNDRGDRGDRPSRPAREAR) shows a compositional bias: basic and acidic residues.

The protein belongs to the universal ribosomal protein uS3 family. As to quaternary structure, part of the 30S ribosomal subunit. Forms a tight complex with proteins S10 and S14.

Functionally, binds the lower part of the 30S subunit head. Binds mRNA in the 70S ribosome, positioning it for translation. In Xanthomonas euvesicatoria pv. vesicatoria (strain 85-10) (Xanthomonas campestris pv. vesicatoria), this protein is Small ribosomal subunit protein uS3.